We begin with the raw amino-acid sequence, 343 residues long: NADH-quinone oxidoreductase subunit H (343 aa).

The next 8 membrane-spanning stretches (helical) occupy residues 5–25 (FIIEKSVVIVAVFALTMLMAM), 76–96 (FLFVVGPAIAMSTALMTSAVI), 119–139 (ALLYIFAVVSVGVYGIMIGGW), 158–178 (VSYEVAMGLSMIALLMMTGTL), 190–210 (MNWNVFYQPVSFLIFLICAFA), 243–263 (LFAEYANMFISSAILAILFFG), 284–304 (ILGFLALFIKICGFIFFYMWV), and 323–343 (ILIPLAILNIMVTGICLLLFK).

The protein belongs to the complex I subunit 1 family. In terms of assembly, NDH-1 is composed of 14 different subunits. Subunits NuoA, H, J, K, L, M, N constitute the membrane sector of the complex.

It is found in the cell inner membrane. The catalysed reaction is a quinone + NADH + 5 H(+)(in) = a quinol + NAD(+) + 4 H(+)(out). In terms of biological role, NDH-1 shuttles electrons from NADH, via FMN and iron-sulfur (Fe-S) centers, to quinones in the respiratory chain. The immediate electron acceptor for the enzyme in this species is believed to be ubiquinone. Couples the redox reaction to proton translocation (for every two electrons transferred, four hydrogen ions are translocated across the cytoplasmic membrane), and thus conserves the redox energy in a proton gradient. This subunit may bind ubiquinone. This Flavobacterium psychrophilum (strain ATCC 49511 / DSM 21280 / CIP 103535 / JIP02/86) protein is NADH-quinone oxidoreductase subunit H.